A 118-amino-acid polypeptide reads, in one-letter code: Aspartate 1-decarboxylase (118 aa).

Serine 25 (schiff-base intermediate with substrate; via pyruvic acid) is an active-site residue. The residue at position 25 (serine 25) is a Pyruvic acid (Ser). Threonine 57 is a substrate binding site. Tyrosine 58 (proton donor) is an active-site residue. Residue 73-75 participates in substrate binding; it reads GAA.

This sequence belongs to the PanD family. As to quaternary structure, heterooctamer of four alpha and four beta subunits. Requires pyruvate as cofactor. Post-translationally, is synthesized initially as an inactive proenzyme, which is activated by self-cleavage at a specific serine bond to produce a beta-subunit with a hydroxyl group at its C-terminus and an alpha-subunit with a pyruvoyl group at its N-terminus.

It localises to the cytoplasm. The catalysed reaction is L-aspartate + H(+) = beta-alanine + CO2. Its pathway is cofactor biosynthesis; (R)-pantothenate biosynthesis; beta-alanine from L-aspartate: step 1/1. Its function is as follows. Catalyzes the pyruvoyl-dependent decarboxylation of aspartate to produce beta-alanine. The chain is Aspartate 1-decarboxylase from Leptospira biflexa serovar Patoc (strain Patoc 1 / Ames).